A 606-amino-acid polypeptide reads, in one-letter code: MCTIISVNHHHVAILSKPKVKLFHTKNKRSASINLPWSLSPSSSAASRPISCSISSKLYTISSAQEETRRSGNYHPSVWDFDFIQSLDTDHYKEEKQLEREEELIMEVKKLLGAKMEATKQLELIDDLQNLGLSYFFRDEIKNILNSIYKIFQNNNSTKVGDLHFTSLGFRLLRQHGFNVSQGVFDCFKNEHGSDFEKTLIGEDTKGVLQLYEASFLLREGEDTLEVARKFSTEFLEEKLKAGIDGDNLSSSIGHSLEIPLHWRIQRLEERWFLDAYSRRKDMNPIIFELAKLDFNIIQATQQEELKDLSRWWNDSSLPQKLPFVRDRLVESYYWALGLFEAHKFGYERKTAAKIITLITALDDVYDIYGTLDELQLFTHVIRRWDTESATQLPYYLQLFYFVLYNFVSEVAYHILKEEGFISIPFLHRAWVDLVEGYLQEAKWYYTKYTPTMEEYLNYASITIGAPAVISQIYFMLAKSKEKPVIESFYEYDEIIRLSGMLVRLPDDLGTLPFEMKRGDVAKSIQIYMKEQNATREEAEEHVRFMIREAWKEMNTTMAANSDLRGDVVMAAANLGRDAQFMYLDGDGNHSQLQHRIANLLFKPYV.

The transit peptide at 1–51 (MCTIISVNHHHVAILSKPKVKLFHTKNKRSASINLPWSLSPSSSAASRPIS) directs the protein to the chloroplast. The (2E)-geranyl diphosphate site is built by Arg326, Asp363, Asp367, Arg504, and Asp507. Asp363 and Asp367 together coordinate Mg(2+). Positions 363–367 (DDVYD) match the DDXXD motif motif. Residues Asp507, Thr511, and Glu515 each contribute to the Mg(2+) site.

The protein belongs to the terpene synthase family. Tpsb subfamily. Mg(2+) serves as cofactor. Mn(2+) is required as a cofactor.

It is found in the plastid. Its subcellular location is the chloroplast. It catalyses the reaction (2E)-geranyl diphosphate + H2O = (R)-linalool + diphosphate. Its pathway is secondary metabolite biosynthesis; terpenoid biosynthesis. Functionally, monoterpene synthase that catalyzes the formation of (3R)-linalool from geranyl diphosphate, but not from farnesyl diphosphate or geranylgeranyl diphosphate. In Mentha aquatica (Water mint), this protein is R-linalool synthase, chloroplastic.